Here is a 430-residue protein sequence, read N- to C-terminus: Adenylosuccinate synthetase (430 aa).

GTP is bound by residues 12-18 (GDEGKGK) and 40-42 (GHT). D13 (proton acceptor) is an active-site residue. Residues D13 and G40 each coordinate Mg(2+). IMP contacts are provided by residues 13–16 (DEGK), 38–41 (NAGH), T130, R144, Q224, T239, and R303. Residue H41 is the Proton donor of the active site. 299–305 (VNTGRKR) is a binding site for substrate. Residues R305, 331-333 (KLD), and 413-415 (STS) contribute to the GTP site.

It belongs to the adenylosuccinate synthetase family. In terms of assembly, homodimer. Mg(2+) is required as a cofactor.

The protein resides in the cytoplasm. It catalyses the reaction IMP + L-aspartate + GTP = N(6)-(1,2-dicarboxyethyl)-AMP + GDP + phosphate + 2 H(+). It functions in the pathway purine metabolism; AMP biosynthesis via de novo pathway; AMP from IMP: step 1/2. Plays an important role in the de novo pathway of purine nucleotide biosynthesis. Catalyzes the first committed step in the biosynthesis of AMP from IMP. This Nitrobacter hamburgensis (strain DSM 10229 / NCIMB 13809 / X14) protein is Adenylosuccinate synthetase.